We begin with the raw amino-acid sequence, 64 residues long: Beta-defensin 2 (64 aa).

Residues 1-22 (MRLHHLLLVLFFVVLSAGSGFT) form the signal peptide. 3 disulfide bridges follow: Cys-31/Cys-60, Cys-38/Cys-53, and Cys-43/Cys-61.

The protein belongs to the beta-defensin family.

The protein resides in the secreted. Has bactericidal activity. The protein is Beta-defensin 2 (DEFB2) of Ovis aries (Sheep).